Here is a 468-residue protein sequence, read N- to C-terminus: ATP synthase subunit beta (468 aa).

Glycine 156 to threonine 163 lines the ATP pocket.

This sequence belongs to the ATPase alpha/beta chains family. In terms of assembly, F-type ATPases have 2 components, CF(1) - the catalytic core - and CF(0) - the membrane proton channel. CF(1) has five subunits: alpha(3), beta(3), gamma(1), delta(1), epsilon(1). CF(0) has three main subunits: a(1), b(2) and c(9-12). The alpha and beta chains form an alternating ring which encloses part of the gamma chain. CF(1) is attached to CF(0) by a central stalk formed by the gamma and epsilon chains, while a peripheral stalk is formed by the delta and b chains.

It is found in the cell inner membrane. It carries out the reaction ATP + H2O + 4 H(+)(in) = ADP + phosphate + 5 H(+)(out). Produces ATP from ADP in the presence of a proton gradient across the membrane. The catalytic sites are hosted primarily by the beta subunits. This chain is ATP synthase subunit beta, found in Sulfurimonas denitrificans (strain ATCC 33889 / DSM 1251) (Thiomicrospira denitrificans (strain ATCC 33889 / DSM 1251)).